A 750-amino-acid polypeptide reads, in one-letter code: Ribosomal RNA large subunit methyltransferase K/L (750 aa).

Residues Thr-46 to Leu-157 form the THUMP domain.

It belongs to the methyltransferase superfamily. RlmKL family.

Its subcellular location is the cytoplasm. It catalyses the reaction guanosine(2445) in 23S rRNA + S-adenosyl-L-methionine = N(2)-methylguanosine(2445) in 23S rRNA + S-adenosyl-L-homocysteine + H(+). It carries out the reaction guanosine(2069) in 23S rRNA + S-adenosyl-L-methionine = N(2)-methylguanosine(2069) in 23S rRNA + S-adenosyl-L-homocysteine + H(+). Its function is as follows. Specifically methylates the guanine in position 2445 (m2G2445) and the guanine in position 2069 (m7G2069) of 23S rRNA. The sequence is that of Ribosomal RNA large subunit methyltransferase K/L from Pseudomonas syringae pv. tomato (strain ATCC BAA-871 / DC3000).